A 238-amino-acid chain; its full sequence is Probable transcriptional regulatory protein YeeN (238 aa).

Belongs to the TACO1 family. YeeN subfamily.

Its subcellular location is the cytoplasm. The protein is Probable transcriptional regulatory protein YeeN of Salmonella typhimurium (strain LT2 / SGSC1412 / ATCC 700720).